The chain runs to 211 residues: Urease accessory protein UreG (211 aa).

12–19 lines the GTP pocket; that stretch reads GPVGAGKT.

It belongs to the SIMIBI class G3E GTPase family. UreG subfamily. In terms of assembly, homodimer. UreD, UreF and UreG form a complex that acts as a GTP-hydrolysis-dependent molecular chaperone, activating the urease apoprotein by helping to assemble the nickel containing metallocenter of UreC. The UreE protein probably delivers the nickel.

Its subcellular location is the cytoplasm. Its function is as follows. Facilitates the functional incorporation of the urease nickel metallocenter. This process requires GTP hydrolysis, probably effectuated by UreG. This is Urease accessory protein UreG from Paracoccus denitrificans (strain Pd 1222).